A 274-amino-acid chain; its full sequence is Large ribosomal subunit protein uL2 (274 aa).

Residues 224-274 (VMNPVDHPHGGGEGRSPIGRNPVTPWGKPALGARTRKKKPGDRLIVKRRAR) are disordered. Positions 257–274 (RTRKKKPGDRLIVKRRAR) are enriched in basic residues.

Belongs to the universal ribosomal protein uL2 family. As to quaternary structure, part of the 50S ribosomal subunit. Forms a bridge to the 30S subunit in the 70S ribosome.

In terms of biological role, one of the primary rRNA binding proteins. Required for association of the 30S and 50S subunits to form the 70S ribosome, for tRNA binding and peptide bond formation. It has been suggested to have peptidyltransferase activity; this is somewhat controversial. Makes several contacts with the 16S rRNA in the 70S ribosome. In Pelotomaculum thermopropionicum (strain DSM 13744 / JCM 10971 / SI), this protein is Large ribosomal subunit protein uL2.